The chain runs to 375 residues: SAP-like protein BP-73 (375 aa).

Disordered stretches follow at residues 46–113 (PNNH…VPGE), 130–233 (RARG…VKFQ), and 257–315 (TLEN…PSLQ). Residues 59–70 (HQKGGSARRKSK) show a composition bias toward basic residues. The segment covering 76-86 (DDSENIDEFDT) has biased composition (acidic residues). The segment covering 88–109 (IMSSKNGPPISLTSNSRPQATS) has biased composition (polar residues). Basic and acidic residues-rich tracts occupy residues 134-152 (KGKEEKKPEQAKAQGERGS) and 163-186 (HSVDQRRKSGDEKEQSVDQTKRSN). Residues 187 to 197 (ESGNKQNSSIF) show a composition bias toward polar residues. Over residues 295–311 (DEPDASDTDEPSGEYDE) the composition is skewed to acidic residues. Residues 338-375 (DLSTLKVTELRELAKSRGIKGYSKMKKNDLVELLSNMA) form an interaction with WAXY region.

Binds to the DNA in the promoter region of WAXY containing the sequence 5'-ACGCACGCTAACGTGA-3'. In terms of tissue distribution, expressed in tissues with high cell division activities: in root tips, stem node, panicle, flower and immature seed. Weakly expressed in root and leaf.

Functionally, may regulate cell proliferation and plant growth. The sequence is that of SAP-like protein BP-73 (BP-73) from Oryza sativa subsp. japonica (Rice).